A 54-amino-acid chain; its full sequence is UPF0391 membrane protein Mfla_0947/Mfla_1091 (54 aa).

A run of 2 helical transmembrane segments spans residues 6–26 (VIFF…IAAG) and 30–50 (IAKI…VAGI).

It belongs to the UPF0391 family.

The protein resides in the cell membrane. This is UPF0391 membrane protein Mfla_0947/Mfla_1091 from Methylobacillus flagellatus (strain ATCC 51484 / DSM 6875 / VKM B-1610 / KT).